The primary structure comprises 309 residues: Dicarboxylate carrier SLC25A8 (309 aa).

Residues 1–16 (MVGFKATDVPPTATVK) lie on the Mitochondrial intermembrane side of the membrane. 3 Solcar repeats span residues 11-106 (PTAT…VKQF), 114-203 (ASIG…IKDA), and 212-297 (DDLP…LKRA). The segment at 16–63 (KFLGAGTAACIADLITFPLDTAKVRLQIQGESQGPVRATASAQYRGVM) is important for interaction with long-chain fatty acids. A helical transmembrane segment spans residues 17-40 (FLGAGTAACIADLITFPLDTAKVR). Residues 41–77 (LQIQGESQGPVRATASAQYRGVMGTILTMVRTEGPRS) are Mitochondrial matrix-facing. The chain crosses the membrane as a helical span at residues 78 to 103 (LYNGLVAGLQRQMSFASVRIGLYDSV). At 104–119 (KQFYTKGSEHASIGSR) the chain is on the mitochondrial intermembrane side. A helical transmembrane segment spans residues 120-145 (LLAGSTTGALAVAVAQPTDVVKVRFQ). Over 146–173 (AQARAGGGRRYQSTVNAYKTIAREEGFR) the chain is Mitochondrial matrix. A helical transmembrane segment spans residues 174 to 199 (GLWKGTSPNVARNAIVNCAELVTYDL). Topologically, residues 200 to 217 (IKDALLKANLMTDDLPCH) are mitochondrial intermembrane. The helical transmembrane segment at 218-242 (FTSAFGAGFCTTVIASPVDVVKTRY) threads the bilayer. Residues 243-268 (MNSALGQYSSAGHCALTMLQKEGPRA) are Mitochondrial matrix-facing. A helical transmembrane segment spans residues 269–294 (FYKGFMPSFLRLGSWNVVMFVTYEQL). The important for interaction with long-chain fatty acids stretch occupies residues 278-285 (LRLGSWNV). The Mitochondrial intermembrane portion of the chain corresponds to 295–309 (KRALMAACTSREAPF).

It belongs to the mitochondrial carrier (TC 2.A.29) family. Homotetramer. Adopts an asymmetrical dimer of dimers functional form. As to expression, widely expressed in adult human tissues, including tissues rich in macrophages. Most expressed in white adipose tissue and skeletal muscle.

The protein resides in the mitochondrion inner membrane. The enzyme catalyses L-aspartate(out) + phosphate(in) + H(+)(in) = L-aspartate(in) + phosphate(out) + H(+)(out). It catalyses the reaction oxaloacetate(out) + phosphate(in) + H(+)(in) = oxaloacetate(in) + phosphate(out) + H(+)(out). The catalysed reaction is (S)-malate(out) + phosphate(in) + H(+)(in) = (S)-malate(in) + phosphate(out) + H(+)(out). It carries out the reaction malonate(out) + phosphate(in) + H(+)(in) = malonate(in) + phosphate(out) + H(+)(out). The enzyme catalyses sulfate(out) + phosphate(in) + H(+)(in) = sulfate(in) + phosphate(out) + H(+)(out). It catalyses the reaction (S)-malate(out) = (S)-malate(in). The catalysed reaction is L-aspartate(out) = L-aspartate(in). It carries out the reaction phosphate(in) = phosphate(out). The enzyme catalyses chloride(in) = chloride(out). It catalyses the reaction H(+)(in) = H(+)(out). The catalysed reaction is a long-chain fatty acid(out) = a long-chain fatty acid(in). Its activity is regulated as follows. Inhibited by pyridoxal- 5'-phosphate, bathophenanthroline, tannic acid, bromocresol purple, butylmalonate and phenylsuccinate. Proton conductance is activated by cardiolipin and long-chain free fatty acids and inhibited by purine nucleotides ATP and ADP. Chloride ion transporter activity is inhibited by long-chain free fatty acids. Functionally, antiporter that exports dicarboxylate intermediates of the Krebs cycle in exchange for phosphate plus a proton across the inner membrane of mitochondria, a process driven by mitochondrial motive force with an overall impact on glycolysis, glutaminolysis and glutathione-dependent redox balance. Continuous export of oxaloacetate and related four-carbon dicarboxylates from mitochondrial matrix into the cytosol negatively regulates the oxidation of acetyl-CoA substrates via the Krebs cycle, lowering the ATP/ADP ratio and reactive oxygen species (ROS) production. May mediate inducible proton entry into the mitochondrial matrix affecting ATP turnover as a protection mechanism against oxidative stress. The proton currents are most likely associated with fatty acid flipping across the inner membrane of mitochondria in a metabolic process regulated by free fatty acids and purine nucleotides. Regulates the use of glucose as a source of energy. Required for glucose-induced DRP1-dependent mitochondrial fission and neuron activation in the ventromedial nucleus of the hypothalamus (VMH). This mitochondrial adaptation mechanism modulates the VMH pool of glucose-excited neurons with an impact on systemic glucose homeostasis. Regulates ROS levels and metabolic reprogramming of macrophages during the resolution phase of inflammation. Attenuates ROS production in response to IL33 to preserve the integrity of the Krebs cycle required for persistent production of itaconate and subsequent GATA3-dependent differentiation of inflammation-resolving alternatively activated macrophages. Can unidirectionally transport anions including L-malate, L-aspartate, phosphate and chloride ions. Does not mediate adaptive thermogenesis. This chain is Dicarboxylate carrier SLC25A8 (UCP2), found in Homo sapiens (Human).